We begin with the raw amino-acid sequence, 632 residues long: Eukaryotic peptide chain release factor GTP-binding subunit ERF3B (632 aa).

Disordered regions lie at residues 1-31 (MDLG…GDGI) and 162-200 (SEAK…SIPS). Positions 178–192 (ESVKEVMEEKEEVRK) are enriched in basic and acidic residues. In terms of domain architecture, tr-type G spans 205-429 (KEHVNVVFIG…YLDSLPNFNR (225 aa)). The tract at residues 214 to 221 (GHVDAGKS) is G1. 217-222 (DAGKST) lines the GTP pocket. A G2 region spans residues 270-274 (GKTVE). The segment at 291–294 (DAPG) is G3. GTP is bound by residues 353–356 (NKMD) and 395–397 (SGL). Residues 353–356 (NKMD) form a G4 region. The interval 395-397 (SGL) is G5.

This sequence belongs to the TRAFAC class translation factor GTPase superfamily. Classic translation factor GTPase family. ERF3 subfamily. As to quaternary structure, component of the eRF1-eRF3-GTP ternary complex, composed of ETF1/ERF1 and ERF3 (GSPT1/ERF3A or GSPT2/ERF3B) and GTP. Component of the transient SURF (SMG1-UPF1-eRF1-eRF3) complex. Interacts with UPF1 and PABPC1. In terms of tissue distribution, highly expressed in brain. Moderately expressed in spleen and lung. Weakly expressed in heart, liver and kidney. Expression during the cell-cycle progression is constant.

The protein localises to the cytoplasm. It catalyses the reaction GTP + H2O = GDP + phosphate + H(+). Its function is as follows. GTPase component of the eRF1-eRF3-GTP ternary complex, a ternary complex that mediates translation termination in response to the termination codons UAA, UAG and UGA. GSPT2/ERF3B mediates ETF1/ERF1 delivery to stop codons: The eRF1-eRF3-GTP complex binds to a stop codon in the ribosomal A-site. GTP hydrolysis by GSPT2/ERF3B induces a conformational change that leads to its dissociation, permitting ETF1/ERF1 to accommodate fully in the A-site. Component of the transient SURF complex which recruits UPF1 to stalled ribosomes in the context of nonsense-mediated decay (NMD) of mRNAs containing premature stop codons. The sequence is that of Eukaryotic peptide chain release factor GTP-binding subunit ERF3B (Gspt2) from Mus musculus (Mouse).